The sequence spans 211 residues: Glutathione S-transferase (211 aa).

The 85-residue stretch at 3 to 87 folds into the GST N-terminal domain; the sequence is DNIVLYYFDA…YLSKKYNICG (85 aa). Glutathione contacts are provided by residues 58–59, 71–72, D105, K117, and T121; these read QV and QS. One can recognise a GST C-terminal domain in the interval 89-211; it reads SELNEFYADM…YITNRKESVY (123 aa).

It belongs to the GST superfamily. Homodimer. In the absence of ligands two homodimers may interact to form a tetramer.

The enzyme catalyses RX + glutathione = an S-substituted glutathione + a halide anion + H(+). Inhibited by chloroquine, cibacron blue, ferriprotoporphyrin IX (hemin) and S-hexylglutathione. Conjugation of reduced glutathione to a wide number of exogenous and endogenous hydrophobic electrophiles. May also function as a storage protein or ligandin for parasitotoxic ferriprotoporphyrin IX (hemin). This Plasmodium falciparum (isolate 3D7) protein is Glutathione S-transferase.